A 287-amino-acid polypeptide reads, in one-letter code: 33 kDa chaperonin (287 aa).

Intrachain disulfides connect C233–C235 and C266–C269.

The protein belongs to the HSP33 family. Post-translationally, under oxidizing conditions two disulfide bonds are formed involving the reactive cysteines. Under reducing conditions zinc is bound to the reactive cysteines and the protein is inactive.

Its subcellular location is the cytoplasm. Redox regulated molecular chaperone. Protects both thermally unfolding and oxidatively damaged proteins from irreversible aggregation. Plays an important role in the bacterial defense system toward oxidative stress. This chain is 33 kDa chaperonin, found in Thermodesulfovibrio yellowstonii (strain ATCC 51303 / DSM 11347 / YP87).